The following is a 210-amino-acid chain: dTTP/UTP pyrophosphatase (210 aa).

Asp-89 acts as the Proton acceptor in catalysis.

It belongs to the Maf family. YhdE subfamily. A divalent metal cation serves as cofactor.

It localises to the cytoplasm. The enzyme catalyses dTTP + H2O = dTMP + diphosphate + H(+). It carries out the reaction UTP + H2O = UMP + diphosphate + H(+). Its function is as follows. Nucleoside triphosphate pyrophosphatase that hydrolyzes dTTP and UTP. May have a dual role in cell division arrest and in preventing the incorporation of modified nucleotides into cellular nucleic acids. The protein is dTTP/UTP pyrophosphatase of Burkholderia lata (strain ATCC 17760 / DSM 23089 / LMG 22485 / NCIMB 9086 / R18194 / 383).